Here is a 226-residue protein sequence, read N- to C-terminus: Ornithine decarboxylase antizyme (226 aa).

It belongs to the ODC antizyme family. Interacts with ODC and thereby sterically blocks ODC homodimerization.

Ornithine decarboxylase (ODC) antizyme protein that negatively regulates ODC activity and intracellular polyamine biosynthesis in response to increased intracellular polyamine levels. Binds to ODC monomers, inhibiting the assembly of the functional ODC homodimer, and targets the monomers for ubiquitin-independent proteolytic destruction by the 26S proteasome. This Schizosaccharomyces japonicus (Fission yeast) protein is Ornithine decarboxylase antizyme (spa1).